The primary structure comprises 566 residues: 3-oxosteroid 1-dehydrogenase (566 aa).

10–39 (DVVVVGSGAAGMVAALVAAHRGLSTVVVEK) contributes to the FAD binding site.

This sequence belongs to the FAD-dependent oxidoreductase 2 family. 3-oxosteroid dehydrogenase subfamily. FAD is required as a cofactor.

The enzyme catalyses a 3-oxosteroid + A = a 3-oxo-Delta(1)-steroid + AH2. It carries out the reaction a 3-oxo-Delta(4)-steroid + A = a 3-oxo-Delta(1,4)-steroid + AH2. Functionally, involved in the degradation of cholesterol. Catalyzes the elimination of the C-1 and C-2 hydrogen atoms of the A-ring from the polycyclic ring structure of 3-ketosteroids. Is also involved in the formation of 3-keto-1,4-diene-steroid from 3-keto-4-ene-steroid. The chain is 3-oxosteroid 1-dehydrogenase (kstD) from Mycobacterium tuberculosis (strain CDC 1551 / Oshkosh).